Here is a 149-residue protein sequence, read N- to C-terminus: SsrA-binding protein (149 aa).

It belongs to the SmpB family.

Its subcellular location is the cytoplasm. In terms of biological role, required for rescue of stalled ribosomes mediated by trans-translation. Binds to transfer-messenger RNA (tmRNA), required for stable association of tmRNA with ribosomes. tmRNA and SmpB together mimic tRNA shape, replacing the anticodon stem-loop with SmpB. tmRNA is encoded by the ssrA gene; the 2 termini fold to resemble tRNA(Ala) and it encodes a 'tag peptide', a short internal open reading frame. During trans-translation Ala-aminoacylated tmRNA acts like a tRNA, entering the A-site of stalled ribosomes, displacing the stalled mRNA. The ribosome then switches to translate the ORF on the tmRNA; the nascent peptide is terminated with the 'tag peptide' encoded by the tmRNA and targeted for degradation. The ribosome is freed to recommence translation, which seems to be the essential function of trans-translation. The sequence is that of SsrA-binding protein from Anaplasma phagocytophilum (strain HZ).